A 143-amino-acid polypeptide reads, in one-letter code: Transcriptional regulator MraZ (143 aa).

2 SpoVT-AbrB domains span residues 5 to 47 (EFRH…PMKE) and 76 to 119 (ATEC…DEAR).

It belongs to the MraZ family. In terms of assembly, forms oligomers.

It localises to the cytoplasm. Its subcellular location is the nucleoid. The polypeptide is Transcriptional regulator MraZ (Enterococcus hirae).